We begin with the raw amino-acid sequence, 211 residues long: Thiamine-phosphate synthase (211 aa).

4-amino-2-methyl-5-(diphosphooxymethyl)pyrimidine is bound by residues 37–41 and Asn-69; that span reads QLREK. Residues Asp-70 and Glu-89 each coordinate Mg(2+). Ser-108 contributes to the 4-amino-2-methyl-5-(diphosphooxymethyl)pyrimidine binding site. Residue 134–136 coordinates 2-[(2R,5Z)-2-carboxy-4-methylthiazol-5(2H)-ylidene]ethyl phosphate; the sequence is TTT. Lys-137 contributes to the 4-amino-2-methyl-5-(diphosphooxymethyl)pyrimidine binding site. Residues Gly-163 and 183–184 each bind 2-[(2R,5Z)-2-carboxy-4-methylthiazol-5(2H)-ylidene]ethyl phosphate; that span reads VS.

The protein belongs to the thiamine-phosphate synthase family. It depends on Mg(2+) as a cofactor.

It carries out the reaction 2-[(2R,5Z)-2-carboxy-4-methylthiazol-5(2H)-ylidene]ethyl phosphate + 4-amino-2-methyl-5-(diphosphooxymethyl)pyrimidine + 2 H(+) = thiamine phosphate + CO2 + diphosphate. The enzyme catalyses 2-(2-carboxy-4-methylthiazol-5-yl)ethyl phosphate + 4-amino-2-methyl-5-(diphosphooxymethyl)pyrimidine + 2 H(+) = thiamine phosphate + CO2 + diphosphate. It catalyses the reaction 4-methyl-5-(2-phosphooxyethyl)-thiazole + 4-amino-2-methyl-5-(diphosphooxymethyl)pyrimidine + H(+) = thiamine phosphate + diphosphate. The protein operates within cofactor biosynthesis; thiamine diphosphate biosynthesis; thiamine phosphate from 4-amino-2-methyl-5-diphosphomethylpyrimidine and 4-methyl-5-(2-phosphoethyl)-thiazole: step 1/1. In terms of biological role, condenses 4-methyl-5-(beta-hydroxyethyl)thiazole monophosphate (THZ-P) and 2-methyl-4-amino-5-hydroxymethyl pyrimidine pyrophosphate (HMP-PP) to form thiamine monophosphate (TMP). The protein is Thiamine-phosphate synthase of Enterococcus faecalis (strain ATCC 700802 / V583).